A 1969-amino-acid chain; its full sequence is Cytadherence high molecular weight protein 1 (1969 aa).

The stretch at 148 to 166 (YYDENEEWVWTGYFDEDNK) is one HAT 1 repeat. The interval 174 to 244 (KPAEVEALEE…QPESEQEGSG (71 aa)) is disordered. Composition is skewed to acidic residues over residues 179–207 (EALE…EVVE) and 214–242 (QPEE…EQEG). 3 HAT repeats span residues 258-278 (YYDE…NNFV), 300-331 (AQQE…VEGY), and 333-353 (YYDE…NNFV). Positions 294–319 (QVEEYSAQQEQVQEEYEQQPEQEGSG) are disordered. The disordered stretch occupies residues 365–393 (VSEEQYSESVSEEQEPASEEQVAEEPAQV). Residues 374–387 (VSEEQEPASEEQVA) are compositionally biased toward acidic residues. HAT repeat units lie at residues 477-497 (YYDE…GMFI) and 959-997 (LTLV…DQNN). Residues 1000 to 1027 (SDKDSKTQKVDQLIEEFNKQEAIKKTEE) are a coiled coil. Residues 1029-1067 (EAKKASEPFYNKYIGNKQFGYYNDKNVWIWNGYFDENDQ) form an HAT 7 repeat. 3 coiled-coil regions span residues 1082–1190 (IEDE…FDNF), 1547–1621 (SVNQ…LALT), and 1758–1790 (NRGD…NKKV).

It localises to the cell projection. Its subcellular location is the attachment organelle membrane. In terms of biological role, component of the cytoskeleton-like structure which stabilizes the shape of the wall-less Mycoplasma. This cytoskeleton-like network of accessory proteins containing HMW proteins 1 to 5 allows the proper anchoring of cytadhesin proteins in the mycoplasmal membrane at the attachment organelle. This Mycoplasmoides gallisepticum (strain R(low / passage 15 / clone 2)) (Mycoplasma gallisepticum) protein is Cytadherence high molecular weight protein 1 (hlp1).